The primary structure comprises 198 residues: MAKILVLYYSMYGHIETMAHAVAEGANKVDGAEVVIKRVPETMQPEIFAKAGGKTQNAPVATPQELPDYDAIIFGTPTRFGNMSGQMRTFLDQTGGLWASGALYGKLASVFSSTGTGGGQEQTITSTWTTLAHHGMVIVPIGYAAQELFDVSQVRGGTPYGATTIAGGDGSRQPSQEELSIARYQGEYVAGLAVKLNG.

In terms of domain architecture, Flavodoxin-like spans 4 to 189 (ILVLYYSMYG…SIARYQGEYV (186 aa)). Residues 10–15 (SMYGHI) and 78–80 (TRF) each bind FMN. Position 12 (Tyr-12) interacts with NAD(+). Trp-98 provides a ligand contact to substrate. Residues 113-118 (STGTGG) and His-133 each bind FMN.

This sequence belongs to the WrbA family. It depends on FMN as a cofactor.

It catalyses the reaction a quinone + NADH + H(+) = a quinol + NAD(+). The catalysed reaction is a quinone + NADPH + H(+) = a quinol + NADP(+). The polypeptide is NAD(P)H dehydrogenase (quinone) (Citrobacter koseri (strain ATCC BAA-895 / CDC 4225-83 / SGSC4696)).